Here is a 172-residue protein sequence, read N- to C-terminus: 3-hydroxydecanoyl-[acyl-carrier-protein] dehydratase (172 aa).

H71 is a catalytic residue.

This sequence belongs to the thioester dehydratase family. FabA subfamily. In terms of assembly, homodimer.

It localises to the cytoplasm. It catalyses the reaction a (3R)-hydroxyacyl-[ACP] = a (2E)-enoyl-[ACP] + H2O. It carries out the reaction (3R)-hydroxydecanoyl-[ACP] = (2E)-decenoyl-[ACP] + H2O. The enzyme catalyses (2E)-decenoyl-[ACP] = (3Z)-decenoyl-[ACP]. The protein operates within lipid metabolism; fatty acid biosynthesis. Necessary for the introduction of cis unsaturation into fatty acids. Catalyzes the dehydration of (3R)-3-hydroxydecanoyl-ACP to E-(2)-decenoyl-ACP and then its isomerization to Z-(3)-decenoyl-ACP. Can catalyze the dehydratase reaction for beta-hydroxyacyl-ACPs with saturated chain lengths up to 16:0, being most active on intermediate chain length. The sequence is that of 3-hydroxydecanoyl-[acyl-carrier-protein] dehydratase from Pectobacterium atrosepticum (strain SCRI 1043 / ATCC BAA-672) (Erwinia carotovora subsp. atroseptica).